The following is an 81-amino-acid chain: ATP synthase subunit c (81 aa).

The next 2 helical transmembrane spans lie at 5-25 (IAAG…IGAG) and 57-77 (VGLV…FVFA).

The protein belongs to the ATPase C chain family. As to quaternary structure, F-type ATPases have 2 components, F(1) - the catalytic core - and F(0) - the membrane proton channel. F(1) has five subunits: alpha(3), beta(3), gamma(1), delta(1), epsilon(1). F(0) has three main subunits: a(1), b(2) and c(10-14). The alpha and beta chains form an alternating ring which encloses part of the gamma chain. F(1) is attached to F(0) by a central stalk formed by the gamma and epsilon chains, while a peripheral stalk is formed by the delta and b chains.

Its subcellular location is the cell membrane. F(1)F(0) ATP synthase produces ATP from ADP in the presence of a proton or sodium gradient. F-type ATPases consist of two structural domains, F(1) containing the extramembraneous catalytic core and F(0) containing the membrane proton channel, linked together by a central stalk and a peripheral stalk. During catalysis, ATP synthesis in the catalytic domain of F(1) is coupled via a rotary mechanism of the central stalk subunits to proton translocation. In terms of biological role, key component of the F(0) channel; it plays a direct role in translocation across the membrane. A homomeric c-ring of between 10-14 subunits forms the central stalk rotor element with the F(1) delta and epsilon subunits. This Mycobacterium bovis (strain ATCC BAA-935 / AF2122/97) protein is ATP synthase subunit c.